A 545-amino-acid chain; its full sequence is Chaperonin GroEL (545 aa).

ATP contacts are provided by residues 30 to 33 (TLGP), Lys51, 87 to 91 (DGTTT), Gly415, and Asp495.

Belongs to the chaperonin (HSP60) family. As to quaternary structure, forms a cylinder of 14 subunits composed of two heptameric rings stacked back-to-back. Interacts with the co-chaperonin GroES.

The protein resides in the cytoplasm. The enzyme catalyses ATP + H2O + a folded polypeptide = ADP + phosphate + an unfolded polypeptide.. Its function is as follows. Together with its co-chaperonin GroES, plays an essential role in assisting protein folding. The GroEL-GroES system forms a nano-cage that allows encapsulation of the non-native substrate proteins and provides a physical environment optimized to promote and accelerate protein folding. The polypeptide is Chaperonin GroEL (Shewanella denitrificans (strain OS217 / ATCC BAA-1090 / DSM 15013)).